The chain runs to 237 residues: Proteasome subunit beta type-1 (237 aa).

The protein belongs to the peptidase T1B family. In terms of assembly, the 26S proteasome consists of a 20S proteasome core and two 19S regulatory subunits. The 20S proteasome core is a barrel-shaped complex made of 28 subunits that are arranged in four stacked rings. The two outer rings are each formed by seven alpha subunits, and the two inner rings are formed by seven beta subunits. The proteolytic activity is exerted by three beta-subunits psmb5, psmb6 and psmb7.

It is found in the cytoplasm. Its subcellular location is the nucleus. Its function is as follows. Non-catalytic component of the 20S core proteasome complex involved in the proteolytic degradation of most intracellular proteins. This complex plays numerous essential roles within the cell by associating with different regulatory particles. Associated with two 19S regulatory particles, forms the 26S proteasome and thus participates in the ATP-dependent degradation of ubiquitinated proteins. The 26S proteasome plays a key role in the maintenance of protein homeostasis by removing misfolded or damaged proteins that could impair cellular functions, and by removing proteins whose functions are no longer required. Associated with the PA200 or PA28, the 20S proteasome mediates ubiquitin-independent protein degradation. This Danio rerio (Zebrafish) protein is Proteasome subunit beta type-1.